The sequence spans 617 residues: Protein DWARF AND LOW-TILLERING (617 aa).

2 disordered regions span residues 29 to 92 (KRGS…HDED) and 159 to 206 (PSLA…GVPA). Residues 171-187 (KSPSDSSSSSGTDGGSS) are compositionally biased toward low complexity. Residues 208 to 594 (GQAEREALEL…QPLYTVTAWT (387 aa)) enclose the GRAS domain. The interval 215–295 (LELVRALTAC…LTDDAFGGGD (81 aa)) is leucine repeat I (LRI). The VHIID stretch occupies residues 301–366 (LRILNAITPI…VPPAHVRITG (66 aa)). A VHIID motif is present at residues 332-336 (VHVID). Positions 376-408 (ETGARLARVAAALGLAFEFHAVVDRLEDVRLWM) are leucine repeat II (LRII). A PFYRE region spans residues 417–508 (VAVNCVLAMH…EEMFAREIRN (92 aa)). Residues 511–594 (AFEGPERFER…QPLYTVTAWT (84 aa)) are SAW. Positions 596-617 (AGDGAGGSTVSASTTASHSQQS) are disordered. A compositionally biased stretch (low complexity) spans 603–617 (STVSASTTASHSQQS).

It belongs to the GRAS family. Interacts with GSK2. Interacts with SMOS1 (via C-terminus). In terms of processing, phosphorylated on serine and threonine residues by GSK2. Dephosphorylated during response to brassinosteroid. In terms of tissue distribution, expressed in the shoot apical meristem (SAM) and elongating cells of young seedlings. Expressed in leaf joints, culms, internodes, stems, young panicles, primary roots and lateral roots.

The protein localises to the nucleus. In terms of biological role, probable transcription factor that acts as a positive regulator of brassinosteroid (BR) signaling. Functions downstream of BRI1 and GSK2 to modulate BR responses. Acts as a direct target of GSK2 kinase to mediate BR responses. Involved in feedback inhibition of BR biosynthetic genes. Repressed by BZR1. Cooperatively functions in a transactivating complex with SMOS1 to enhance the transcription of the SMOS1 target PHI-1, and regulate plant organ size. Interaction between SMOS1 and DLT is a crosstalk point for auxin and brassinosteroid signaling. The sequence is that of Protein DWARF AND LOW-TILLERING from Oryza sativa subsp. japonica (Rice).